The primary structure comprises 466 residues: Nuclear pore complex protein Nup50 (466 aa).

Over residues 1-14 (MAKRVAEKELTDRN) the composition is skewed to basic and acidic residues. The disordered stretch occupies residues 1 to 22 (MAKRVAEKELTDRNWDEEDEVE). Position 8 is an N6-acetyllysine (Lys-8). Ser-52 is subject to Phosphoserine. Repeat 1 spans residues 76-77 (FG). The segment at 76–302 (FGGSGGKPLE…FSAGSSSLFG (227 aa)) is 5 X 2 AA repeats of F-G. Position 82 is an N6-acetyllysine (Lys-82). Repeat 2 spans residues 112–113 (FG). Position 126 is an N6-acetyllysine (Lys-126). 2 disordered regions span residues 128–150 (ISSP…STAC) and 200–257 (LENG…AEKK). A compositionally biased stretch (polar residues) spans 131–150 (PKCNNSNQPPSSGPASSTAC). Residues 143 to 205 (GPASSTACPG…IEKQLENGGG (63 aa)) form a binding to CDKN1B region. Ser-208 carries the phosphoserine modification. The stretch at 225–226 (FG) is repeat 3. Positions 225 to 235 (FGSTKLQQESP) are enriched in polar residues. Phosphoserine is present on Ser-234. Residues 241–257 (NKAEDTSEKVEFTAEKK) show a composition bias toward basic and acidic residues. Position 246 is a phosphothreonine (Thr-246). Ser-268 is modified (phosphoserine). The stretch at 271-272 (FG) is repeat 4. Position 294 is a phosphoserine (Ser-294). Repeat 5 spans residues 301–302 (FG). The segment at 316-343 (SAKASESPAGGGSSECRDGEEEENDEPP) is disordered. Positions 333-466 (DGEEEENDEP…HKILLEKKDA (134 aa)) constitute a RanBD1 domain. A Glycyl lysine isopeptide (Lys-Gly) (interchain with G-Cter in SUMO2) cross-link involves residue Lys-351. The residue at position 448 (Lys-448) is an N6-acetyllysine.

Does not interact with TPR. Interacts with Importin alpha-2, Importin beta, Importin beta-2, NUP153, Ran binding protein 7, CDKN1B and itself. In terms of tissue distribution, widely expressed at low levels. Highest in the developing neural tube and adult testes.

It localises to the nucleus. Its subcellular location is the nuclear pore complex. It is found in the nucleus membrane. Functionally, component of the nuclear pore complex that has a direct role in nuclear protein import. Actively displaces NLSs from importin-alpha, and facilitates disassembly of the importin-alpha:beta-cargo complex and importin recycling. Interacts with regulatory proteins of cell cycle progression including CDKN1B. This interaction is required for correct intracellular transport and degradation of CDKN1B. This chain is Nuclear pore complex protein Nup50 (Nup50), found in Mus musculus (Mouse).